The chain runs to 145 residues: MPSKVCTLILLFSVINQMKCGSTTDCAMRVFKETIKEMSEVADLQLETLQNLSPDTKRQMKIAIMDVLTSMGLFLEMSTASSFSFATLPIYMLRAQNLMNLLSMDLENLQPEQGTLSESVEKMKNMLISVVNTLPKKAMICFQME.

The signal sequence occupies residues 1–20; sequence MPSKVCTLILLFSVINQMKC.

This is an uncharacterized protein from Caenorhabditis elegans.